A 308-amino-acid chain; its full sequence is E3 ubiquitin-protein ligase SINAT2 (308 aa).

The RING-type zinc-finger motif lies at 60 to 96 (CPVCTNLMYPPIHQCPNGHTLCSNCKLRVQNTCPTCR). The interval 110-303 (VAESLEVPCR…QELKLRVTGR (194 aa)) is SBD. The segment at 113-173 (SLEVPCRYQN…LVVHLKDDHK (61 aa)) adopts an SIAH-type zinc-finger fold. Zn(2+)-binding residues include C118, C125, H137, C141, C148, C155, H167, and H172.

Belongs to the SINA (Seven in absentia) family. In terms of assembly, interacts with RAP2-2. Interacts with SINAT6. Interacts with ATG6 and TRAF1A. Interacts with WAV3. Interacts with FREE1. Interacts with ELC/VPS23A.

The protein localises to the endosome. The protein resides in the multivesicular body. It is found in the cytoplasmic vesicle. Its subcellular location is the autophagosome. It catalyses the reaction S-ubiquitinyl-[E2 ubiquitin-conjugating enzyme]-L-cysteine + [acceptor protein]-L-lysine = [E2 ubiquitin-conjugating enzyme]-L-cysteine + N(6)-ubiquitinyl-[acceptor protein]-L-lysine.. The protein operates within protein modification; protein ubiquitination. In terms of biological role, E3 ubiquitin-protein ligase that mediates ubiquitination and subsequent proteasomal degradation of target proteins. E3 ubiquitin ligases accept ubiquitin from an E2 ubiquitin-conjugating enzyme in the form of a thioester and then directly transfers the ubiquitin to targeted substrates. It probably triggers the ubiquitin-mediated degradation of different substrates. Mediates the proteasomal-dependent degradation of ATG6, a component of the autophagosome complex. Requires TRAF1A/MUSE14 and TRAF1B/MUSE13 to target ATG6 for ubiquitination and subsequent regulation of autophagosome assembly. Modulates directly the ubiquitination and proteasomal-dependent degradation of FREE1, a component of the ESCRT-I complex. Modulates directly the ubiquitination and proteasomal-dependent degradation of ELC/VPS23A, a component of the ESCRT-I complex. This chain is E3 ubiquitin-protein ligase SINAT2, found in Arabidopsis thaliana (Mouse-ear cress).